A 213-amino-acid polypeptide reads, in one-letter code: Urease accessory protein UreG (213 aa).

A GTP-binding site is contributed by 17-24 (GPVGSGKT).

Belongs to the SIMIBI class G3E GTPase family. UreG subfamily. Homodimer. UreD, UreF and UreG form a complex that acts as a GTP-hydrolysis-dependent molecular chaperone, activating the urease apoprotein by helping to assemble the nickel containing metallocenter of UreC. The UreE protein probably delivers the nickel.

The protein resides in the cytoplasm. Functionally, facilitates the functional incorporation of the urease nickel metallocenter. This process requires GTP hydrolysis, probably effectuated by UreG. The polypeptide is Urease accessory protein UreG (Delftia acidovorans (strain DSM 14801 / SPH-1)).